The following is a 247-amino-acid chain: Cyclin-Q (247 aa).

The protein belongs to the cyclin family. Cyclin-like FAM58 subfamily.

May be an activating cyclin for the cyclin-associated kinase CDK10. This chain is Cyclin-Q (ccnq), found in Danio rerio (Zebrafish).